Here is a 333-residue protein sequence, read N- to C-terminus: Taste receptor type 2 member 38 (333 aa).

The Extracellular segment spans residues 1 to 17 (MLTLTRICTVSYEVRST). Residues 18-38 (FLFISVLEFAVGFLTNAFIFL) form a helical membrane-spanning segment. The Cytoplasmic portion of the chain corresponds to 39-55 (VNFWDVVKRQPLSNSDC). Residues 56–76 (VLLCLSISRLFLHGLLFLSAI) form a helical membrane-spanning segment. Residues 77–94 (QLTHFQKLSEPLNHSYHA) lie on the Extracellular side of the membrane. A helical transmembrane segment spans residues 95–115 (IIMLWMIANQANLWLATCLSL). The Cytoplasmic segment spans residues 116-142 (LYCSKLIRSSHTFLICLASWVSRKICQ). Residues 143-163 (MLLGIILCSCICTVLCVWCYF) traverse the membrane as a helical segment. The Extracellular segment spans residues 164–190 (SRPHFTVTTVLFTNNNTRLNWQIKDLN). Asn178 carries N-linked (GlcNAc...) asparagine glycosylation. Residues 191–211 (LFYSFLFCYLWSVPPFLLFLV) form a helical membrane-spanning segment. Over 212–251 (SSGMLTVSLGRHMRTMKVYTRDFRDPSLEAHIKALKSLVS) the chain is Cytoplasmic. A helical transmembrane segment spans residues 252 to 272 (FFCFFVISSCAAFISVPLLIL). Residues 273–276 (WRDK) are Extracellular-facing. A helical membrane pass occupies residues 277-297 (IGVMVCVGIMAACPSGHAAIL). At 298 to 333 (ISGNAKLRRAVTTILLWAQSSLKVRADHKADSRTLC) the chain is on the cytoplasmic side.

This sequence belongs to the G-protein coupled receptor T2R family.

The protein resides in the membrane. Receptor that may play a role in the perception of bitterness and is gustducin-linked. May play a role in sensing the chemical composition of the gastrointestinal content. The activity of this receptor may stimulate alpha gustducin, mediate PLC-beta-2 activation and lead to the gating of TRPM5. This is Taste receptor type 2 member 38 (TAS2R38) from Hylobates klossii (Kloss's gibbon).